A 167-amino-acid polypeptide reads, in one-letter code: MNDLLSRAMRLLSQRDHSESELRRKLASQPFSAKGHWGKQTGRSDNEPVADIDPKVIEQVIAYCYQHNWLDDARFATSYINSRSRKGYGAQRIRSELMQKGVDKELIQAAFEISEINWCLLAKEVAQRKFSEILPIEWKEKVKVQRYLLYRGFFQEEIQSIYNDFVE.

The disordered stretch occupies residues 19-49; sequence ESELRRKLASQPFSAKGHWGKQTGRSDNEPV.

The protein belongs to the RecX family.

It is found in the cytoplasm. Its function is as follows. Modulates RecA activity. The chain is Regulatory protein RecX from Yersinia enterocolitica serotype O:8 / biotype 1B (strain NCTC 13174 / 8081).